Reading from the N-terminus, the 120-residue chain is UPF0231 protein Spro_4007 (120 aa).

This sequence belongs to the UPF0231 family.

In Serratia proteamaculans (strain 568), this protein is UPF0231 protein Spro_4007.